The sequence spans 83 residues: DNA-directed RNA polymerase subunit omega (83 aa).

Belongs to the RNA polymerase subunit omega family. As to quaternary structure, the RNAP catalytic core consists of 2 alpha, 1 beta, 1 beta' and 1 omega subunit. When a sigma factor is associated with the core the holoenzyme is formed, which can initiate transcription.

It catalyses the reaction RNA(n) + a ribonucleoside 5'-triphosphate = RNA(n+1) + diphosphate. Its function is as follows. Promotes RNA polymerase assembly. Latches the N- and C-terminal regions of the beta' subunit thereby facilitating its interaction with the beta and alpha subunits. In Chromohalobacter salexigens (strain ATCC BAA-138 / DSM 3043 / CIP 106854 / NCIMB 13768 / 1H11), this protein is DNA-directed RNA polymerase subunit omega.